We begin with the raw amino-acid sequence, 375 residues long: Chaperone protein DnaJ (375 aa).

In terms of domain architecture, J spans 5-69; sequence DYYEVLGVGK…QKRAHYDQFG (65 aa). A CR-type zinc finger spans residues 132 to 214; that stretch reads GKETTIEIPR…CGGTGKVKKR (83 aa). Cys-145, Cys-148, Cys-162, Cys-165, Cys-188, Cys-191, Cys-202, and Cys-205 together coordinate Zn(2+). CXXCXGXG motif repeat units follow at residues 145–152, 162–169, 188–195, and 202–209; these read CETCSGSG, CSHCGGSG, CHYCNGTG, and CSTCGGTG.

This sequence belongs to the DnaJ family. Homodimer. Requires Zn(2+) as cofactor.

It is found in the cytoplasm. In terms of biological role, participates actively in the response to hyperosmotic and heat shock by preventing the aggregation of stress-denatured proteins and by disaggregating proteins, also in an autonomous, DnaK-independent fashion. Unfolded proteins bind initially to DnaJ; upon interaction with the DnaJ-bound protein, DnaK hydrolyzes its bound ATP, resulting in the formation of a stable complex. GrpE releases ADP from DnaK; ATP binding to DnaK triggers the release of the substrate protein, thus completing the reaction cycle. Several rounds of ATP-dependent interactions between DnaJ, DnaK and GrpE are required for fully efficient folding. Also involved, together with DnaK and GrpE, in the DNA replication of plasmids through activation of initiation proteins. The sequence is that of Chaperone protein DnaJ from Bacillus licheniformis (strain ATCC 14580 / DSM 13 / JCM 2505 / CCUG 7422 / NBRC 12200 / NCIMB 9375 / NCTC 10341 / NRRL NRS-1264 / Gibson 46).